The following is a 1073-amino-acid chain: 3-hydroxy-3-methylglutaryl-coenzyme A reductase 1 (1073 aa).

The next 8 helical transmembrane spans lie at 23–43, 181–201, 211–231, 298–318, 326–346, 399–419, 459–479, and 498–518; these read FMVV…DDYI, FDIL…IKVF, FWLA…ALLV, HLVV…LTGL, SLIL…ILGL, IAYF…FWLG, GTVV…MVQL, and IISK…VYFL. The region spanning 182–346 is the SSD domain; the sequence is DILLIFVAYL…YTFFSAILGL (165 aa). Over residues 542-565 the composition is skewed to low complexity; sequence SSVTATTTTTATGTTSSGAATSKT. The interval 542–589 is disordered; that stretch reads SSVTATTTTTATGTTSSGAATSKTIGNNKGLKSVQEIPDNEDESSDEE. Residues 579–589 are compositionally biased toward acidic residues; the sequence is PDNEDESSDEE. The active-site Charge relay system is the glutamate 714. Residue 720–726 coordinates CoA; sequence STMRGCK. NADP(+) contacts are provided by residues 781–783 and 808–816; these read SRF and DAMGMNMIS. Lysine 848 (charge relay system) is an active-site residue. A CoA-binding site is contributed by 877-879; the sequence is VLK. Aspartate 924 acts as the Charge relay system in catalysis. Residues 997-1017 form a helical membrane-spanning segment; that stretch reads IVASAVLAAELSLCSALAAGH. 1021 to 1022 serves as a coordination point for CoA; sequence SH. Histidine 1022 acts as the Proton donor in catalysis. The disordered stretch occupies residues 1025–1056; it reads HNRSKAPAAGATTTTTPAITDSKASNGSIASN. 1026-1027 serves as a coordination point for NADP(+); it reads NR. Low complexity predominate over residues 1030–1042; sequence APAAGATTTTTPA. Residues 1046 to 1055 show a composition bias toward polar residues; sequence SKASNGSIAS.

Belongs to the HMG-CoA reductase family.

The protein resides in the endoplasmic reticulum membrane. The enzyme catalyses (R)-mevalonate + 2 NADP(+) + CoA = (3S)-3-hydroxy-3-methylglutaryl-CoA + 2 NADPH + 2 H(+). It functions in the pathway metabolic intermediate biosynthesis; (R)-mevalonate biosynthesis; (R)-mevalonate from acetyl-CoA: step 3/3. In terms of biological role, HMG-CoA reductase; part of the first module of ergosterol biosynthesis pathway that includes the early steps of the pathway, conserved across all eukaryotes, and which results in the formation of mevalonate from acetyl-coenzyme A (acetyl-CoA). HMG1 catalyzes the reduction of hydroxymethylglutaryl-CoA (HMG-CoA) to mevalonate. The first module starts with the action of the cytosolic acetyl-CoA acetyltransferase ERG10 that catalyzes the formation of acetoacetyl-CoA. The hydroxymethylglutaryl-CoA synthase ERG13 then condenses acetyl-CoA with acetoacetyl-CoA to form HMG-CoA. The 3-hydroxy-3-methylglutaryl-coenzyme A (HMG-CoA) reductase HMG1 finally reduces HMG-CoA to produce mevalonate. The chain is 3-hydroxy-3-methylglutaryl-coenzyme A reductase 1 from Candida albicans (strain SC5314 / ATCC MYA-2876) (Yeast).